Reading from the N-terminus, the 314-residue chain is Melanoma-associated antigen 6 (314 aa).

The span at 1–20 shows a compositional bias: basic and acidic residues; the sequence is MPLEQRSQHCKPEEGLEARG. The disordered stretch occupies residues 1–99; that stretch reads MPLEQRSQHC…QEEEGPSTFP (99 aa). Positions 21–44 are enriched in low complexity; that stretch reads EALGLVGAQAPATEEQEAASSSST. A compositionally biased stretch (polar residues) spans 65–87; that stretch reads PQGASSLPTTMNYPLWSQSYEDS. Residues 109 to 308 enclose the MAGE domain; the sequence is LSRKVAKLVH…ISYPLLHEWA (200 aa).

As to quaternary structure, interacts with TRIM28. Post-translationally, ubiquitinated by the DCX(DCAF12) complex specifically recognizes the diglutamate (Glu-Glu) at the C-terminus, leading to its degradation. As to expression, expressed in many tumors of several types, such as melanoma, head and neck squamous cell carcinoma, lung carcinoma and breast carcinoma, but not in normal tissues except for testes.

Activator of ubiquitin ligase activity of RING-type zinc finger-containing E3 ubiquitin-protein ligases that acts as a repressor of autophagy. May enhance ubiquitin ligase activity of TRIM28 and stimulate p53/TP53 ubiquitination by TRIM28. Proposed to act through recruitment and/or stabilization of the Ubl-conjugating enzyme (E2) at the E3:substrate complex. May play a role in tumor transformation or aspects of tumor progression. In vitro promotes cell viability in melanoma cell lines. The sequence is that of Melanoma-associated antigen 6 from Homo sapiens (Human).